Consider the following 248-residue polypeptide: 1-(5-phosphoribosyl)-5-[(5-phosphoribosylamino)methylideneamino] imidazole-4-carboxamide isomerase (248 aa).

Asp8 serves as the catalytic Proton acceptor. The active-site Proton donor is Asp131.

This sequence belongs to the HisA/HisF family.

Its subcellular location is the cytoplasm. The enzyme catalyses 1-(5-phospho-beta-D-ribosyl)-5-[(5-phospho-beta-D-ribosylamino)methylideneamino]imidazole-4-carboxamide = 5-[(5-phospho-1-deoxy-D-ribulos-1-ylimino)methylamino]-1-(5-phospho-beta-D-ribosyl)imidazole-4-carboxamide. Its pathway is amino-acid biosynthesis; L-histidine biosynthesis; L-histidine from 5-phospho-alpha-D-ribose 1-diphosphate: step 4/9. The chain is 1-(5-phosphoribosyl)-5-[(5-phosphoribosylamino)methylideneamino] imidazole-4-carboxamide isomerase from Nitrosomonas eutropha (strain DSM 101675 / C91 / Nm57).